Here is a 145-residue protein sequence, read N- to C-terminus: MVGRNSAIAAGVCGALFIGYCIYFDRKRRSDPNFKNRLRERRKKQKLAKERAGLSKLPDLKDAEAVQKFFLEEIQLGEELLAQGEYEKGVDHLTNAIAVCGQPQQLLQVLQQTLPPPVFQMLLTKLPTISQRIVSAQSLAEDDVE.

Topologically, residues 1–6 (MVGRNS) are mitochondrial intermembrane. A helical transmembrane segment spans residues 7–24 (AIAAGVCGALFIGYCIYF). Residues 25–145 (DRKRRSDPNF…AQSLAEDDVE (121 aa)) lie on the Cytoplasmic side of the membrane. Glycyl lysine isopeptide (Lys-Gly) (interchain with G-Cter in ubiquitin) cross-links involve residues Lys-35, Lys-56, Lys-61, and Lys-68. Phosphoserine occurs at positions 135 and 138.

This sequence belongs to the Tom20 family. Forms part of the preprotein translocase complex of the outer mitochondrial membrane (TOM complex) which consists of at least 7 different proteins (TOMM5, TOMM6, TOMM7, TOMM20, TOMM22, TOMM40 and TOMM70). Interacts with TOM22. Interacts with APEX1. Interacts with TBC1D21. Upon mitochondrial depolarization, interacts with PINK1; the interaction is required for PINK1-TOM-TIM23 supercomplex formation which is critical for PINK1 stabilization at the outer mitochondrial membrane, kinase activation and downstream mitophagy. In terms of processing, ubiquitinated by PRKN during mitophagy, leading to its degradation and enhancement of mitophagy. Deubiquitinated by USP30.

It localises to the mitochondrion outer membrane. Central component of the receptor complex responsible for the recognition and translocation of cytosolically synthesized mitochondrial preproteins. Together with TOM22 functions as the transit peptide receptor at the surface of the mitochondrion outer membrane and facilitates the movement of preproteins into the TOM40 translocation pore. Required for the translocation across the mitochondrial outer membrane of cytochrome P450 monooxygenases. The chain is Mitochondrial import receptor subunit TOM20 homolog (TOMM20) from Bos taurus (Bovine).